A 59-amino-acid polypeptide reads, in one-letter code: Chromatin protein Cren7 (59 aa).

Belongs to the Cren7 family. In terms of assembly, monomer. In terms of processing, methylated at multiple sites, to varying extents.

Its subcellular location is the chromosome. It localises to the cytoplasm. In terms of biological role, a chromatin protein, binds double-stranded DNA without sequence specificity. Constrains negative DNA supercoils. In Pyrobaculum neutrophilum (strain DSM 2338 / JCM 9278 / NBRC 100436 / V24Sta) (Thermoproteus neutrophilus), this protein is Chromatin protein Cren7.